The primary structure comprises 192 residues: Casparian strip membrane protein 1 (192 aa).

The Cytoplasmic portion of the chain corresponds to 1 to 26; that stretch reads MTKSVRLEEGDASKVLVPVGSNKGVS. Residues 27–47 traverse the membrane as a helical segment; sequence VMDLVLRLVGIAGTLGAAIAM. Topologically, residues 48 to 75 are extracellular; that stretch reads GTNEQTLPFFTRFVVFNAEYDDFRSFRL. A helical transmembrane segment spans residues 76-96; that stretch reads FVIVNAIVCAYFVLTLPLSIV. At 97–107 the chain is on the cytoplasmic side; sequence HIMRSAARGSR. The chain crosses the membrane as a helical span at residues 108–128; it reads ILLIIMDTVMLALLTAGASAA. At 129-161 the chain is on the extracellular side; sequence ASIVYLAHNGNTSTNWLPVCQQYGDFCQGASGS. N-linked (GlcNAc...) asparagine glycosylation is present at N139. A helical transmembrane segment spans residues 162–182; that stretch reads LIGSFGAVVVFILIILLGAIA. At 183 to 192 the chain is on the cytoplasmic side; it reads LSRHAKRVVL.

This sequence belongs to the Casparian strip membrane proteins (CASP) family. As to quaternary structure, homodimer and heterodimers.

It is found in the cell membrane. Its function is as follows. Regulates membrane-cell wall junctions and localized cell wall deposition. Required for establishment of the Casparian strip membrane domain (CSD) and the subsequent formation of Casparian strips, a cell wall modification of the root endodermis that determines an apoplastic barrier between the intraorganismal apoplasm and the extraorganismal apoplasm and prevents lateral diffusion. This chain is Casparian strip membrane protein 1, found in Lactuca saligna (Willowleaf lettuce).